The sequence spans 204 residues: COBRA-like protein 5 (204 aa).

An N-terminal signal peptide occupies residues 1 to 24; the sequence is MESLFSTMIVLLLVSFSCLISTEA. N-linked (GlcNAc...) asparagine glycans are attached at residues asparagine 31 and asparagine 195.

This sequence belongs to the COBRA family. Expressed in roots, stems, leaves, flowers and siliques.

The protein is COBRA-like protein 5 (COBL5) of Arabidopsis thaliana (Mouse-ear cress).